A 118-amino-acid polypeptide reads, in one-letter code: Small ribosomal subunit protein mS41 (118 aa).

Residues 1 to 24 (MLRVVAKAQYPAAVRCFSTSHAAF) constitute a mitochondrion transit peptide.

Belongs to the mitochondrion-specific ribosomal protein mS41 family.

It localises to the mitochondrion. In terms of biological role, involved in telomere length regulation. The polypeptide is Small ribosomal subunit protein mS41 (FYV4) (Yarrowia lipolytica (strain CLIB 122 / E 150) (Yeast)).